The following is a 1022-amino-acid chain: Protein translocase subunit SECA1, chloroplastic (1022 aa).

A chloroplast-targeting transit peptide spans 1 to 72 (MVSPLCDSQL…SRKRSTSVNA (72 aa)). Ser73 is subject to N-acetylserine. 176–183 (MRTGEGKT) provides a ligand contact to ATP. Residues 985–1022 (KDEEKKSQNGKPSKQVDNASEKPKQVGVTDEPSSIASA) are disordered. Positions 993 to 1002 (NGKPSKQVDN) are enriched in polar residues.

It belongs to the SecA family. Part of the Sec protein translocation apparatus. Interacts probably with SCY1. As to expression, expressed in green tissues, including cotyledons, rosette and cauline leaves, and sepals. Also detected at the base and the tip of the trichome.

The protein localises to the plastid. It localises to the chloroplast stroma. It is found in the chloroplast thylakoid membrane. The catalysed reaction is ATP + H2O + chloroplast-proteinSide 1 = ADP + phosphate + chloroplast-proteinSide 2.. Functionally, has a central role in coupling the hydrolysis of ATP to the transfer of proteins across the thylakoid membrane. Involved in photosynthetic acclimation and required for chloroplast biogenesis. The protein is Protein translocase subunit SECA1, chloroplastic of Arabidopsis thaliana (Mouse-ear cress).